Reading from the N-terminus, the 490-residue chain is ATP synthase subunit beta, chloroplastic (490 aa).

Thr-6 carries the phosphothreonine modification. Ser-13 carries the post-translational modification Phosphoserine. 172-179 (GGAGVGKT) contacts ATP.

Belongs to the ATPase alpha/beta chains family. As to quaternary structure, F-type ATPases have 2 components, CF(1) - the catalytic core - and CF(0) - the membrane proton channel. CF(1) has five subunits: alpha(3), beta(3), gamma(1), delta(1), epsilon(1). CF(0) has four main subunits: a(1), b(1), b'(1) and c(9-12).

It localises to the plastid. The protein resides in the chloroplast thylakoid membrane. It catalyses the reaction ATP + H2O + 4 H(+)(in) = ADP + phosphate + 5 H(+)(out). Functionally, produces ATP from ADP in the presence of a proton gradient across the membrane. The catalytic sites are hosted primarily by the beta subunits. This Aethionema grandiflorum (Persian stone-cress) protein is ATP synthase subunit beta, chloroplastic.